Reading from the N-terminus, the 343-residue chain is Small ribosomal subunit biogenesis GTPase RsgA (343 aa).

The 160-residue stretch at 116-275 (RGQLKPVAAN…LIDSPGIREF (160 aa)) folds into the CP-type G domain. Residues 163 to 166 (NKAD) and 217 to 225 (GQSGVGKSS) contribute to the GTP site. The Zn(2+) site is built by C299, C304, H306, and C312.

Belongs to the TRAFAC class YlqF/YawG GTPase family. RsgA subfamily. As to quaternary structure, monomer. Associates with 30S ribosomal subunit, binds 16S rRNA. Requires Zn(2+) as cofactor.

It localises to the cytoplasm. In terms of biological role, one of several proteins that assist in the late maturation steps of the functional core of the 30S ribosomal subunit. Helps release RbfA from mature subunits. May play a role in the assembly of ribosomal proteins into the subunit. Circularly permuted GTPase that catalyzes slow GTP hydrolysis, GTPase activity is stimulated by the 30S ribosomal subunit. The polypeptide is Small ribosomal subunit biogenesis GTPase RsgA (Azotobacter vinelandii (strain DJ / ATCC BAA-1303)).